Consider the following 370-residue polypeptide: tRNA-specific 2-thiouridylase MnmA (370 aa).

Residues 14–21 (GMSGGVDS) and Met40 contribute to the ATP site. An interaction with target base in tRNA region spans residues 100 to 102 (NPD). Cys105 functions as the Nucleophile in the catalytic mechanism. An intrachain disulfide couples Cys105 to Cys205. ATP is bound at residue Gly129. The interaction with tRNA stretch occupies residues 155–157 (KDQ). The active-site Cysteine persulfide intermediate is Cys205. Residues 321-322 (RY) are interaction with tRNA.

This sequence belongs to the MnmA/TRMU family.

The protein resides in the cytoplasm. The enzyme catalyses S-sulfanyl-L-cysteinyl-[protein] + uridine(34) in tRNA + AH2 + ATP = 2-thiouridine(34) in tRNA + L-cysteinyl-[protein] + A + AMP + diphosphate + H(+). In terms of biological role, catalyzes the 2-thiolation of uridine at the wobble position (U34) of tRNA, leading to the formation of s(2)U34. The sequence is that of tRNA-specific 2-thiouridylase MnmA from Bordetella avium (strain 197N).